The primary structure comprises 542 residues: Calcium/calmodulin-dependent protein kinase type II subunit beta (542 aa).

Residues 14–272 (YQLYEDIGKG…AHEALKHPWV (259 aa)) enclose the Protein kinase domain. At Tyr-17 the chain carries Phosphotyrosine. Residues 20–28 (IGKGAFSVV) and Lys-43 contribute to the ATP site. Asp-136 acts as the Proton acceptor in catalysis. The interval 283–292 (HRQETVECLK) is autoinhibitory domain. Thr-287 is modified (phosphothreonine; by autocatalysis). Residues 291 to 301 (LKKFNARRKLK) are calmodulin-binding. A phosphothreonine; by autocatalysis mark is found at Thr-306 and Thr-307. The tract at residues 349–376 (ADGVKPQTNSTKNSSAITSPKGSLPPAA) is disordered. Polar residues predominate over residues 354–369 (PQTNSTKNSSAITSPK). 4 positions are modified to phosphoserine: Ser-367, Ser-371, Ser-394, and Ser-397. Phosphothreonine occurs at positions 400 and 401.

Belongs to the protein kinase superfamily. CAMK Ser/Thr protein kinase family. CaMK subfamily. In terms of assembly, CAMK2 is composed of 4 different chains: alpha (CAMK2A), beta (CAMK2B), gamma (CAMK2G), and delta (CAMK2D). The different isoforms assemble into homo- or heteromultimeric holoenzymes composed of 12 subunits with two hexameric rings stacked one on top of the other. Interacts with SYNGAP1, CAMK2N2 and MPDZ. Interacts with FOXO3. Interacts (when in a kinase inactive state not associated with calmodulin) with ARC; leading to target ARC to inactive synapses. Interacts with CAMK2N1; this interaction requires CAMK2B activation by Ca(2+). In terms of processing, autophosphorylation of Thr-287 following activation by Ca(2+)/calmodulin. Phosphorylation of Thr-287 locks the kinase into an activated state.

The protein localises to the cytoplasm. It localises to the cytoskeleton. It is found in the microtubule organizing center. The protein resides in the centrosome. Its subcellular location is the sarcoplasmic reticulum membrane. The protein localises to the synapse. It carries out the reaction L-seryl-[protein] + ATP = O-phospho-L-seryl-[protein] + ADP + H(+). It catalyses the reaction L-threonyl-[protein] + ATP = O-phospho-L-threonyl-[protein] + ADP + H(+). With respect to regulation, activated by Ca(2+)/calmodulin. Binding of calmodulin results in conformational change that relieves intrasteric autoinhibition and allows autophosphorylation of Thr-287 which turns the kinase in a constitutively active form and confers to the kinase a Ca(2+)-independent activity. Its function is as follows. Calcium/calmodulin-dependent protein kinase that functions autonomously after Ca(2+)/calmodulin-binding and autophosphorylation, and is involved in dendritic spine and synapse formation, neuronal plasticity and regulation of sarcoplasmic reticulum Ca(2+) transport in skeletal muscle. In neurons, plays an essential structural role in the reorganization of the actin cytoskeleton during plasticity by binding and bundling actin filaments in a kinase-independent manner. This structural function is required for correct targeting of CaMK2A, which acts downstream of NMDAR to promote dendritic spine and synapse formation and maintain synaptic plasticity which enables long-term potentiation (LTP) and hippocampus-dependent learning. In developing hippocampal neurons, promotes arborization of the dendritic tree and in mature neurons, promotes dendritic remodeling. Also regulates the migration of developing neurons. Participates in the modulation of skeletal muscle function in response to exercise. In slow-twitch muscles, is involved in regulation of sarcoplasmic reticulum (SR) Ca(2+) transport and in fast-twitch muscle participates in the control of Ca(2+) release from the SR through phosphorylation of triadin, a ryanodine receptor-coupling factor, and phospholamban (PLN/PLB), an endogenous inhibitor of SERCA2A/ATP2A2. In response to interferon-gamma (IFN-gamma) stimulation, catalyzes phosphorylation of STAT1, stimulating the JAK-STAT signaling pathway. Phosphorylates reticulophagy regulator RETREG1 at 'Thr-134' under endoplasmic reticulum stress conditions which enhances RETREG1 oligomerization and its membrane scission and reticulophagy activity. The chain is Calcium/calmodulin-dependent protein kinase type II subunit beta (Camk2b) from Mus musculus (Mouse).